The sequence spans 496 residues: Glycogen synthase (496 aa).

Residue K24 coordinates ADP-alpha-D-glucose.

This sequence belongs to the glycosyltransferase 1 family. Bacterial/plant glycogen synthase subfamily.

The catalysed reaction is [(1-&gt;4)-alpha-D-glucosyl](n) + ADP-alpha-D-glucose = [(1-&gt;4)-alpha-D-glucosyl](n+1) + ADP + H(+). Its pathway is glycan biosynthesis; glycogen biosynthesis. Its function is as follows. Synthesizes alpha-1,4-glucan chains using ADP-glucose. This is Glycogen synthase from Nitrosospira multiformis (strain ATCC 25196 / NCIMB 11849 / C 71).